A 439-amino-acid polypeptide reads, in one-letter code: Ribosomal protein uS12 methylthiotransferase RimO (439 aa).

The region spanning 3 to 113 is the MTTase N-terminal domain; that stretch reads HKVGFVSLGC…VVNAVHQHLP (111 aa). [4Fe-4S] cluster contacts are provided by Cys-12, Cys-48, Cys-77, Cys-144, Cys-148, and Cys-151. The Radical SAM core domain occupies 130–367; that stretch reads LTPRHYAYLK…MQVQAEISRN (238 aa). The region spanning 370–436 is the TRAM domain; it reads KNKIGSTQTV…DYDLYGDLEY (67 aa).

This sequence belongs to the methylthiotransferase family. RimO subfamily. It depends on [4Fe-4S] cluster as a cofactor.

The protein resides in the cytoplasm. The enzyme catalyses L-aspartate(89)-[ribosomal protein uS12]-hydrogen + (sulfur carrier)-SH + AH2 + 2 S-adenosyl-L-methionine = 3-methylsulfanyl-L-aspartate(89)-[ribosomal protein uS12]-hydrogen + (sulfur carrier)-H + 5'-deoxyadenosine + L-methionine + A + S-adenosyl-L-homocysteine + 2 H(+). Catalyzes the methylthiolation of an aspartic acid residue of ribosomal protein uS12. This Legionella pneumophila (strain Corby) protein is Ribosomal protein uS12 methylthiotransferase RimO.